Here is a 141-residue protein sequence, read N- to C-terminus: Hemoglobin subunit alpha (141 aa).

A Globin domain is found at 1-141 (VLSSADKNNI…VSTVLTSKYR (141 aa)). S3 carries the post-translational modification Phosphoserine. N6-succinyllysine occurs at positions 7 and 11. K16 bears the N6-acetyllysine; alternate mark. K16 is subject to N6-succinyllysine; alternate. Residue Y24 is modified to Phosphotyrosine. S35 bears the Phosphoserine mark. The residue at position 40 (K40) is an N6-succinyllysine. Position 49 is a phosphoserine (S49). H58 is an O2 binding site. Residue H87 participates in heme b binding. S102 carries the post-translational modification Phosphoserine. A phosphothreonine mark is found at T108, T134, and T137. S138 carries the post-translational modification Phosphoserine.

It belongs to the globin family. In terms of assembly, heterotetramer of two alpha chains and two beta chains. Red blood cells.

Functionally, involved in oxygen transport from the lung to the various peripheral tissues. Its function is as follows. Hemopressin acts as an antagonist peptide of the cannabinoid receptor CNR1. Hemopressin-binding efficiently blocks cannabinoid receptor CNR1 and subsequent signaling. In Paguma larvata (Masked palm civet), this protein is Hemoglobin subunit alpha (HBA).